Here is a 237-residue protein sequence, read N- to C-terminus: Periplasmic deoxyribonuclease (237 aa).

The N-terminal stretch at 1–27 is a signal peptide; the sequence is MSRPSRVLGLPLLSLGLTLLVSTPLQA.

Belongs to the EndA/NucM nuclease family.

It is found in the periplasm. Functionally, endonuclease which is capable of degrading plasmid DNA. This is Periplasmic deoxyribonuclease (dnsH) from Aeromonas hydrophila.